Reading from the N-terminus, the 364-residue chain is Lytic cellulose monooxygenase (364 aa).

A signal peptide spans 1–34 (MARRSRYISLAAVMATLLSALGVTFLLGQGRAEA). His35 and His144 together coordinate Cu cation. Residues 35 to 225 (HGVAMMPGSR…QENFFSCSDV (191 aa)) enclose the Chitin-binding type-4 domain. The interval 234–261 (VTGIRGSGGTPTPTPTPTTPPTTPPPTH) is disordered. Residues 245-260 (TPTPTPTTPPTTPPPT) show a composition bias toward pro residues. The region spanning 258–364 (PPTHSGSCMA…PVGTIGCVAP (107 aa)) is the CBM2 domain.

Cu(2+) serves as cofactor.

The protein resides in the secreted. The catalysed reaction is [(1-&gt;4)-beta-D-glucosyl]n+m + reduced acceptor + O2 = [(1-&gt;4)-beta-D-glucosyl]m-1-(1-&gt;4)-D-glucono-1,5-lactone + [(1-&gt;4)-beta-D-glucosyl]n + acceptor + H2O.. The protein operates within glycan metabolism; cellulose degradation. Functionally, involved in the degradation of lignocellulosic biomass. Catalyzes the oxidative cleavage of glycosidic bonds in cellulosic substrates via a copper-dependent mechanism. Degrades phosphoric acid swollen cellulose (PASC) to oxidized cellooligosaccharides with degrees of polymerization of 4-8. Also shows activity on agricultural fiber paper pulps such as flax pulp. Is not active on chitin. This is Lytic cellulose monooxygenase from Streptomyces ambofaciens (strain ATCC 23877 / 3486 / DSM 40053 / JCM 4204 / NBRC 12836 / NRRL B-2516).